The sequence spans 537 residues: MGDEDKRITYEDSEPSTGMNYTPSMHQETQEETVMKLKGIDANEPTEGSILLKSSEKKLQETPTEANHVQRLRQMLACPPHGLLDRVVTNVTIIVLLWAVIWSITGSECLPGGNLFGIIILFYCAIIGGKLLGLIKLPTLPPLPSLLGMLLAGFLIRNIPVINDNVQIKHKWSSSLRSIALSIILVRAGLGLDSKALKKLKGVCVRLSMGPCIVEACTSALLAHYLLGLPWQWGFILGFVLGAVSPAVVVPSMLLLQGGGYGVEKGVPTLLMAAGSFDDILAITGFNTCLGIAFSTGSTVFNVLRGVLEVVIGVATGSVLGFFIQYFPSCDQDKLVCKRTFLVLGLSVLAVFSSVHFGFPGSGGLCTLVMAFLAGMGWTSEKAEVEKIIAVAWDIFQPLLFGLIGAEVSIASLRPETVGLCVATVGIAVLIRILTTFLMVCFAGFNLKEKIFISFAWLPKATVQAAIGSVALDTARSHGEKQLEDYGMDVLTVAFLSILITAPIGSLLIGLLGPRLLQKVEHQNKDEEVQGETSVQV.

The segment covering 1–10 (MGDEDKRITY) has biased composition (basic and acidic residues). A disordered region spans residues 1–33 (MGDEDKRITYEDSEPSTGMNYTPSMHQETQEET). The Cytoplasmic segment spans residues 1–86 (MGDEDKRITY…ACPPHGLLDR (86 aa)). Polar residues predominate over residues 15–27 (PSTGMNYTPSMHQ). At S49 the chain carries Phosphoserine. The helical transmembrane segment at 87–104 (VVTNVTIIVLLWAVIWSI) threads the bilayer. At 105–113 (TGSECLPGG) the chain is on the extracellular side. A helical transmembrane segment spans residues 114 to 133 (NLFGIIILFYCAIIGGKLLG). At 134–144 (LIKLPTLPPLP) the chain is on the cytoplasmic side. The chain crosses the membrane as a helical span at residues 145 to 161 (SLLGMLLAGFLIRNIPV). At 162–171 (INDNVQIKHK) the chain is on the extracellular side. A helical transmembrane segment spans residues 172–189 (WSSSLRSIALSIILVRAG). Residues 190–200 (LGLDSKALKKL) lie on the Cytoplasmic side of the membrane. A helical transmembrane segment spans residues 201–227 (KGVCVRLSMGPCIVEACTSALLAHYLL). The Extracellular portion of the chain corresponds to 228–233 (GLPWQW). A helical transmembrane segment spans residues 234–242 (GFILGFVLG). Topologically, residues 243–270 (AVSPAVVVPSMLLLQGGGYGVEKGVPTL) are cytoplasmic. Residues V244, G275, D278, and D279 each contribute to the Na(+) site. The chain crosses the membrane as a helical span at residues 271–290 (LMAAGSFDDILAITGFNTCL). Over 291–300 (GIAFSTGSTV) the chain is Extracellular. Residues 301 to 324 (FNVLRGVLEVVIGVATGSVLGFFI) form a helical membrane-spanning segment. At 325-339 (QYFPSCDQDKLVCKR) the chain is on the cytoplasmic side. The chain crosses the membrane as a helical span at residues 340–357 (TFLVLGLSVLAVFSSVHF). The Extracellular segment spans residues 358–361 (GFPG). Residues 362–373 (SGGLCTLVMAFL) form a helical membrane-spanning segment. Topologically, residues 374–390 (AGMGWTSEKAEVEKIIA) are cytoplasmic. Residues 391–411 (VAWDIFQPLLFGLIGAEVSIA) form a helical membrane-spanning segment. Over 412-417 (SLRPET) the chain is Extracellular. Residues 418–440 (VGLCVATVGIAVLIRILTTFLMV) traverse the membrane as a helical segment. At 441–461 (CFAGFNLKEKIFISFAWLPKA) the chain is on the cytoplasmic side. Residues 462 to 473 (TVQAAIGSVALD) traverse the membrane as a helical segment. Topologically, residues 474-486 (TARSHGEKQLEDY) are extracellular. The chain crosses the membrane as a helical span at residues 487-509 (GMDVLTVAFLSILITAPIGSLLI). Residues 510 to 537 (GLLGPRLLQKVEHQNKDEEVQGETSVQV) are Cytoplasmic-facing.

This sequence belongs to the monovalent cation:proton antiporter 1 (CPA1) transporter (TC 2.A.36) family. In terms of assembly, homodimer; dimerization is essential for SLC9B2 activity. Lipids seem to play a role in the stabilization of the dimerization subdomain.

The protein localises to the cell membrane. It localises to the mitochondrion membrane. Its subcellular location is the endosome membrane. It is found in the recycling endosome membrane. The protein resides in the cytoplasmic vesicle. The protein localises to the secretory vesicle. It localises to the synaptic vesicle membrane. Its subcellular location is the basolateral cell membrane. It is found in the apical cell membrane. It carries out the reaction Li(+)(out) + H(+)(in) = Li(+)(in) + H(+)(out). The catalysed reaction is Li(+)(in) + Na(+)(out) = Li(+)(out) + Na(+)(in). The enzyme catalyses Na(+)(in) + H(+)(out) = Na(+)(out) + H(+)(in). Its activity is regulated as follows. Allosterically inhibited by the N-terminal domain. Inhibited by phloretin. Functionally, electroneutral Na(+) Li(+)/H(+) antiporter that extrudes Na(+) or Li(+) in exchange for external protons across the membrane. Uses the proton gradient/membrane potential to extrude sodium. Contributes to the regulation of intracellular pH and sodium homeostasis. Also able to mediate Na(+)/Li(+) antiporter activity in kidney. May play a physiological role in renal tubular function and blood pressure homeostasis. Plays an important role for insulin secretion and clathrin-mediated endocytosis in beta-cells. Involved in sperm motility and fertility. It is controversial whether SLC9B2 plays a role in osteoclast differentiation or not. The sequence is that of Sodium/hydrogen exchanger 9B2 (SLC9B2) from Pongo abelii (Sumatran orangutan).